Here is a 247-residue protein sequence, read N- to C-terminus: Probable transcriptional regulatory protein Gura_1416 (247 aa).

This sequence belongs to the TACO1 family.

The protein localises to the cytoplasm. This Geotalea uraniireducens (strain Rf4) (Geobacter uraniireducens) protein is Probable transcriptional regulatory protein Gura_1416.